We begin with the raw amino-acid sequence, 200 residues long: Riboflavin kinase (200 aa).

Residues 1 to 20 form a disordered region; sequence MATARPSIVGPDSGPESPFP. Mg(2+)-binding residues include Thr42 and Asn44. The Nucleophile role is filled by Glu110.

It belongs to the flavokinase family. Requires Zn(2+) as cofactor. Mg(2+) is required as a cofactor.

It catalyses the reaction riboflavin + ATP = FMN + ADP + H(+). It functions in the pathway cofactor biosynthesis; FMN biosynthesis; FMN from riboflavin (ATP route): step 1/1. Its function is as follows. Catalyzes the phosphorylation of riboflavin (vitamin B2) to form flavin mononucleotide (FMN) coenzyme. This Pyricularia oryzae (strain 70-15 / ATCC MYA-4617 / FGSC 8958) (Rice blast fungus) protein is Riboflavin kinase (FMN1).